A 307-amino-acid chain; its full sequence is Aspartate carbamoyltransferase catalytic subunit (307 aa).

2 residues coordinate carbamoyl phosphate: R56 and T57. K84 is a binding site for L-aspartate. Carbamoyl phosphate contacts are provided by R106, H136, and Q139. L-aspartate is bound by residues R169 and R221. The carbamoyl phosphate site is built by A262 and P263.

The protein belongs to the aspartate/ornithine carbamoyltransferase superfamily. ATCase family. As to quaternary structure, heterododecamer (2C3:3R2) of six catalytic PyrB chains organized as two trimers (C3), and six regulatory PyrI chains organized as three dimers (R2).

The catalysed reaction is carbamoyl phosphate + L-aspartate = N-carbamoyl-L-aspartate + phosphate + H(+). It participates in pyrimidine metabolism; UMP biosynthesis via de novo pathway; (S)-dihydroorotate from bicarbonate: step 2/3. Its function is as follows. Catalyzes the condensation of carbamoyl phosphate and aspartate to form carbamoyl aspartate and inorganic phosphate, the committed step in the de novo pyrimidine nucleotide biosynthesis pathway. In Streptococcus pneumoniae (strain JJA), this protein is Aspartate carbamoyltransferase catalytic subunit.